The sequence spans 165 residues: uncharacterized protein (165 aa).

The helical transmembrane segment at 7–29 (YPLIFTAFLLIAFCLIFFSYHLI) threads the bilayer.

Its subcellular location is the membrane. This is an uncharacterized protein from Bacillus subtilis (strain 168).